Consider the following 479-residue polypeptide: MFKNAFSNLQKIGRSLMLPVSVLPIAGILLGIGSANFKIIPHTISNIMTEAGSSVFSNMPLIFAIGIALGFTKNDGVSALAAVVSYGIMTKTLSITIPIFSNLSDINVNQKYLLDTGILGGIIAGSISAYIFNTFYRIQLPEYLGFFAGRRFVPIASGLISIIFGCILSIIWPPIGNVIKTFSEWAAYQNPTLAFGIYGTVERALVPFGLHHIWNVPFQMQIGEYNNSIGQIFHGDIARYMAGDSTAGKLSGGFIFKMYGLPFAALAMWHCANKKNKAKIGGIMMSGALTAILTGITEPIEFSFILVAPILYVIHAILAGLAFPICILLNMRSGTSFSHGLIDFIVLSGNSNNFWLFPIVGLFYGILYYGIFYFMIKKFNLKTPGREKSITYINQKTIKETALLVISILGGKTNIINLDACITRLRITVLDISKVNQKKLKNLGASGVIVSGSGIQIVFGTQSDHIKTEIDNYMSNTNQ.

Residues 1–388 (MFKNAFSNLQ…FNLKTPGREK (388 aa)) form the PTS EIIC type-1 domain. The next 9 helical transmembrane spans lie at 15–35 (SLML…IGSA), 51–71 (AGSS…ALGF), 80–100 (LAAV…IPIF), 112–132 (YLLD…AYIF), 152–172 (FVPI…SIIW), 252–272 (GGFI…WHCA), 280–300 (IGGI…TEPI), 305–325 (ILVA…AFPI), and 356–376 (LFPI…YFMI). Positions 399 to 479 (KETALLVISI…IDNYMSNTNQ (81 aa)) constitute a PTS EIIB type-1 domain. Cys421 serves as the catalytic Phosphocysteine intermediate; for EIIB activity. Position 421 is a phosphocysteine (Cys421).

The protein localises to the cell inner membrane. It catalyses the reaction N(pros)-phospho-L-histidyl-[protein] + D-glucose(out) = D-glucose 6-phosphate(in) + L-histidyl-[protein]. Its function is as follows. The phosphoenolpyruvate-dependent sugar phosphotransferase system (sugar PTS), a major carbohydrate active transport system, catalyzes the phosphorylation of incoming sugar substrates concomitantly with their translocation across the cell membrane. The enzyme II complex composed of PtsG and Crr is involved in glucose transport. The protein is PTS system glucose-specific EIICB component (ptsG) of Buchnera aphidicola subsp. Baizongia pistaciae (strain Bp).